A 31-amino-acid chain; its full sequence is Cytochrome b6-f complex subunit 8 (31 aa).

The chain crosses the membrane as a helical span at residues 5–25 (IVSLAWAALMVVFTFSLSLVV).

The protein belongs to the PetN family. In terms of assembly, the 4 large subunits of the cytochrome b6-f complex are cytochrome b6, subunit IV (17 kDa polypeptide, PetD), cytochrome f and the Rieske protein, while the 4 small subunits are PetG, PetL, PetM and PetN. The complex functions as a dimer.

It is found in the plastid. Its subcellular location is the chloroplast thylakoid membrane. Component of the cytochrome b6-f complex, which mediates electron transfer between photosystem II (PSII) and photosystem I (PSI), cyclic electron flow around PSI, and state transitions. This is Cytochrome b6-f complex subunit 8 from Cicer arietinum (Chickpea).